The primary structure comprises 194 residues: Probable thymidylate kinase (194 aa).

9–16 (GIDGVGKS) lines the ATP pocket.

It belongs to the thymidylate kinase family.

The enzyme catalyses dTMP + ATP = dTDP + ADP. The polypeptide is Probable thymidylate kinase (Methanopyrus kandleri (strain AV19 / DSM 6324 / JCM 9639 / NBRC 100938)).